Consider the following 61-residue polypeptide: Tryptophyllin-1 (61 aa).

Positions 1–22 (MDILKKSLFLALFLGLVSISFC) are cleaved as a signal peptide. Positions 23 to 53 (DEEKRQDDDESNESEEKKEIHEEGSQEERRE) are excised as a propeptide. The interval 24–61 (EEKRQDDDESNESEEKKEIHEEGSQEERREKPPPWVPV) is disordered. Residues 36 to 55 (SEEKKEIHEEGSQEERREKP) show a composition bias toward basic and acidic residues.

As to expression, expressed by the skin glands.

The protein resides in the secreted. Functionally, the synthetic peptide inhibits bradykinin-induced relaxation of rat tail artery smooth muscle, and also has anti-proliferative effects on the human prostate cancer cell lines LNCaP, PC3 and DU145. The protein is Tryptophyllin-1 of Phyllomedusa sauvagei (Sauvage's leaf frog).